A 179-amino-acid chain; its full sequence is Ubiquitin-conjugating enzyme E2 C (179 aa).

Residues M1–V31 form a disordered region. Position 2 is an N-acetylalanine (A2). Phosphoserine is present on S3. In terms of domain architecture, UBC core spans P30–S175. Residue C114 is the Glycyl thioester intermediate of the active site.

Belongs to the ubiquitin-conjugating enzyme family. Component of the APC/C complex, composed of at least 14 distinct subunits that assemble into a complex of at least 19 chains with a combined molecular mass of around 1.2 MDa. Within this complex, directly interacts with ANAPC2. Post-translationally, autoubiquitinated by the APC/C complex, leading to its degradation by the proteasome. Its degradation plays a central role in APC/C regulation, allowing cyclin-A accumulation before S phase entry. APC/C substrates inhibit the autoubiquitination of UBE2C/UBCH10 but not its E2 function, hence APC/C remaining active until its substrates have been destroyed.

It carries out the reaction S-ubiquitinyl-[E1 ubiquitin-activating enzyme]-L-cysteine + [E2 ubiquitin-conjugating enzyme]-L-cysteine = [E1 ubiquitin-activating enzyme]-L-cysteine + S-ubiquitinyl-[E2 ubiquitin-conjugating enzyme]-L-cysteine.. The enzyme catalyses S-ubiquitinyl-[E1 ubiquitin-activating enzyme]-L-cysteine + [acceptor protein]-L-lysine = [E1 ubiquitin-activating enzyme]-L-cysteine + N(6)-monoubiquitinyl-[acceptor protein]-L-lysine.. It participates in protein modification; protein ubiquitination. Its function is as follows. Accepts ubiquitin from the E1 complex and catalyzes its covalent attachment to other proteins. In vitro catalyzes 'Lys-11'- and 'Lys-48'-linked polyubiquitination. Acts as an essential factor of the anaphase promoting complex/cyclosome (APC/C), a cell cycle-regulated ubiquitin ligase that controls progression through mitosis. Acts by initiating 'Lys-11'-linked polyubiquitin chains on APC/C substrates, leading to the degradation of APC/C substrates by the proteasome and promoting mitotic exit. In Bos taurus (Bovine), this protein is Ubiquitin-conjugating enzyme E2 C (UBE2C).